The sequence spans 37 residues: Large ribosomal subunit protein bL36 (37 aa).

This sequence belongs to the bacterial ribosomal protein bL36 family.

This is Large ribosomal subunit protein bL36 (rpmJ) from Mycoplasma sp.